The primary structure comprises 593 residues: 2-succinyl-5-enolpyruvyl-6-hydroxy-3-cyclohexene-1-carboxylate synthase (593 aa).

It belongs to the TPP enzyme family. MenD subfamily. Homodimer. Requires Mg(2+) as cofactor. Mn(2+) is required as a cofactor. Thiamine diphosphate serves as cofactor.

It catalyses the reaction isochorismate + 2-oxoglutarate + H(+) = 5-enolpyruvoyl-6-hydroxy-2-succinyl-cyclohex-3-ene-1-carboxylate + CO2. It participates in quinol/quinone metabolism; 1,4-dihydroxy-2-naphthoate biosynthesis; 1,4-dihydroxy-2-naphthoate from chorismate: step 2/7. It functions in the pathway quinol/quinone metabolism; menaquinone biosynthesis. Catalyzes the thiamine diphosphate-dependent decarboxylation of 2-oxoglutarate and the subsequent addition of the resulting succinic semialdehyde-thiamine pyrophosphate anion to isochorismate to yield 2-succinyl-5-enolpyruvyl-6-hydroxy-3-cyclohexene-1-carboxylate (SEPHCHC). In Pelodictyon phaeoclathratiforme (strain DSM 5477 / BU-1), this protein is 2-succinyl-5-enolpyruvyl-6-hydroxy-3-cyclohexene-1-carboxylate synthase.